Consider the following 110-residue polypeptide: MAHATPPSALEQGGPIRVEHDRQRRQFSVRLNGCHDRAVLLYEYVGKRIVDLQHTEVPDAYRGRGIAKHLAKAALDFVVEEDLKAHLTCWYIQKYVKENPLPQYLERLQP.

Positions 19 to 109 constitute an N-acetyltransferase domain; the sequence is EHDRQRRQFS…PLPQYLERLQ (91 aa).

It belongs to the NATD1 family. As to expression, expressed in the heart, testis, kidney and lung.

This Mus musculus (Mouse) protein is Protein NATD1 (Natd1).